Reading from the N-terminus, the 357-residue chain is Histidinol-phosphate aminotransferase 2 (357 aa).

Lys215 is subject to N6-(pyridoxal phosphate)lysine.

Belongs to the class-II pyridoxal-phosphate-dependent aminotransferase family. Histidinol-phosphate aminotransferase subfamily. As to quaternary structure, homodimer. Pyridoxal 5'-phosphate serves as cofactor.

The enzyme catalyses L-histidinol phosphate + 2-oxoglutarate = 3-(imidazol-4-yl)-2-oxopropyl phosphate + L-glutamate. It functions in the pathway amino-acid biosynthesis; L-histidine biosynthesis; L-histidine from 5-phospho-alpha-D-ribose 1-diphosphate: step 7/9. The polypeptide is Histidinol-phosphate aminotransferase 2 (Thiobacillus denitrificans (strain ATCC 25259 / T1)).